Consider the following 49-residue polypeptide: Large ribosomal subunit protein bL33B (49 aa).

This sequence belongs to the bacterial ribosomal protein bL33 family.

The sequence is that of Large ribosomal subunit protein bL33B from Latilactobacillus sakei subsp. sakei (strain 23K) (Lactobacillus sakei subsp. sakei).